The primary structure comprises 236 residues: MAVISMKQLLEAGVHFGHQTRRWNPKMARYIFTERNGIYIIDLQKTVKKVEEAYNFVRELAQDGGKILFVGTKKQAQESVKEEAERTGHYFINQRWLGGTLTNFTTIKKRTARLAELKRMENDGTFAVLPKKEVIVLRKEMDRLEKFLGGIAHMDKLPDALFVIDPRKERIAVAEARKLGIPIVAIVDTNCDPDEIDYVIPGNDDAIRAVKLLTAKMADALLEGNQGTEQQATTTA.

Belongs to the universal ribosomal protein uS2 family.

The protein is Small ribosomal subunit protein uS2 of Brevibacillus brevis (strain 47 / JCM 6285 / NBRC 100599).